The sequence spans 579 residues: Thiol:disulfide interchange protein DsbD (579 aa).

The N-terminal stretch at 1–16 is a signal peptide; it reads MKKLFLFFTLIFTAFA. Intrachain disulfides connect Cys-124/Cys-129 and Cys-193/Cys-315. 8 helical membrane passes run 178-198, 230-250, 254-274, 296-316, 337-357, 376-396, 397-417, and 420-440; these read IFGF…LPML, LTYT…QIAL, YVMI…FGLF, GAFG…SPCT, AVTL…ITLF, FGFV…PEVW, ESRL…LQMS, and GFGY…VQPL. Residues 449–579 enclose the Thioredoxin domain; sequence TTTQSAVENM…AFSNWIEKLL (131 aa). The cysteines at positions 495 and 498 are disulfide-linked.

The protein belongs to the thioredoxin family. DsbD subfamily.

The protein localises to the cell inner membrane. It carries out the reaction [protein]-dithiol + NAD(+) = [protein]-disulfide + NADH + H(+). It catalyses the reaction [protein]-dithiol + NADP(+) = [protein]-disulfide + NADPH + H(+). Its function is as follows. Required to facilitate the formation of correct disulfide bonds in some periplasmic proteins and for the assembly of the periplasmic c-type cytochromes. Acts by transferring electrons from cytoplasmic thioredoxin to the periplasm. This transfer involves a cascade of disulfide bond formation and reduction steps. In Haemophilus influenzae (strain PittGG), this protein is Thiol:disulfide interchange protein DsbD.